Consider the following 870-residue polypeptide: Aminopeptidase N (870 aa).

Substrate-binding positions include glutamate 121 and 261 to 265 (GAMEN). A Zn(2+)-binding site is contributed by histidine 297. Glutamate 298 acts as the Proton acceptor in catalysis. Histidine 301 and glutamate 320 together coordinate Zn(2+).

Belongs to the peptidase M1 family. Zn(2+) serves as cofactor.

It is found in the cell inner membrane. It catalyses the reaction Release of an N-terminal amino acid, Xaa-|-Yaa- from a peptide, amide or arylamide. Xaa is preferably Ala, but may be most amino acids including Pro (slow action). When a terminal hydrophobic residue is followed by a prolyl residue, the two may be released as an intact Xaa-Pro dipeptide.. In terms of biological role, aminopeptidase N is involved in the degradation of intracellular peptides generated by protein breakdown during normal growth as well as in response to nutrient starvation. The chain is Aminopeptidase N (pepN) from Escherichia coli (strain K12).